We begin with the raw amino-acid sequence, 847 residues long: MHLLGPWLLLLVLEYLAFCDSSKWAFEHPETLYAWEGACVWIPCTYRALDGDLESFILFHNPEYNKNTSKFDGTRLYESTKDGKVPSEQKRVQFLGDKKKNCTLSIHPVHVNDSGQLGLRMESKTEKWMERIHLNVSERPFPPHIQLPPEIQESQEVTLTCLLNFSCYGYPIQLQWLLEGVPMRQAAVTSTSLTIKSVFTRSELKFSPQWSHHGKIVTCQLQDADGKFLSNDTVQLNVKHTPKLEIKVTPSDAIVREGDSVTMTCEVSSSNPMYTTVSWLKDGTSLKKQNTLTLNLSEVTKDQSGKYYCQVSNDVGPERSAEVFLQVQYAPEPSTVQILHSPAVEGSEVEFLCMSLANPLPTNYTWYHNGKEMQGRTEEKVHIPKILPWHAGTYSCVAENILGTGQRGPGAELDVQYPPKKVTTVIQNPTPIREGDTVTLSCNYNSSNPSVTRYEWKAHGTWEEPSLGVLKIQNIGWDNTTIACAACNNWCSWASPVALNVQYAPRDVRVRKIKPLSEIHSGNSVSLQCDFSSSHPKEVQFFWEKNGRLLGKESQLNFDSISPEDAGSYSCWVNNSIGQTASKAWTLEVLYAPRRLRVSMSPGDQVMEGKSATLTCESDANPPVSHYTWFDWNNQSLPYHSQKLRLEPVKVQHSGAYWCQGTNSVGKGRSPLSTLNVYYSPETIGRRVAVGLGSCLAILILAICGLKLQRRWKRTQSQQGLQENSSGQSFFVRNKKVRRAPLSEGPHSLGCYNPMMEDGISYTTLRFPETNIPRTGDAETSEMQSPPPDCDDTVTYSVLHKRQMGDYENVIPDFSEDEGIHYSELIQFGVGERPQAQENVDYVILKH.

An N-terminal signal peptide occupies residues 1–19; sequence MHLLGPWLLLLVLEYLAFC. The 119-residue stretch at 20-138 folds into the Ig-like V-type domain; the sequence is DSSKWAFEHP…MERIHLNVSE (119 aa). The Extracellular segment spans residues 20–687; that stretch reads DSSKWAFEHP…YYSPETIGRR (668 aa). N-linked (GlcNAc...) asparagine glycans are attached at residues Asn-67, Asn-101, and Asn-112. Arg-120 provides a ligand contact to N-acetylneuraminate. 9 N-linked (GlcNAc...) asparagine glycosylation sites follow: Asn-135, Asn-164, Asn-231, Asn-295, Asn-363, Asn-428, Asn-445, Asn-448, and Asn-479. Ig-like C2-type domains follow at residues 143-235, 242-324, 331-416, 419-500, 505-582, and 593-676; these read PHIQ…DTVQ, PKLE…AEVF, PEPS…LDVQ, PKKV…VALN, PRDV…QTAS, and PRRL…STLN. The cysteines at positions 161 and 219 are disulfide-linked. 2 disulfides stabilise this stretch: Cys-265–Cys-309 and Cys-353–Cys-396. Intrachain disulfides connect Cys-442-Cys-484 and Cys-529-Cys-571. 2 N-linked (GlcNAc...) asparagine glycosylation sites follow: Asn-574 and Asn-634. The cysteines at positions 616 and 659 are disulfide-linked. Residues 688–708 form a helical membrane-spanning segment; the sequence is VAVGLGSCLAILILAICGLKL. The Cytoplasmic segment spans residues 709–847; sequence QRRWKRTQSQ…ENVDYVILKH (139 aa). Phosphoserine occurs at positions 725, 726, and 729. 2 consecutive short sequence motifs (ITIM motif) follow at residues 760–765 and 794–799; these read ISYTTL and VTYSVL. Tyr-762 carries the post-translational modification Phosphotyrosine. Phosphotyrosine occurs at positions 807, 822, and 842. 2 consecutive short sequence motifs (ITIM motif) follow at residues 820–825 and 840–845; these read IHYSEL and VDYVIL.

This sequence belongs to the immunoglobulin superfamily. SIGLEC (sialic acid binding Ig-like lectin) family. In terms of assembly, predominantly monomer of isoform CD22-beta. Also found as heterodimer of isoform CD22-beta and a shorter isoform. Interacts with PTPN6/SHP-1, LYN, SYK, PIK3R1/PIK3R2 and PLCG1 upon phosphorylation. Interacts with GRB2, INPP5D and SHC1 upon phosphorylation. May form a complex with INPP5D/SHIP, GRB2 and SHC1. Post-translationally, phosphorylation of Tyr-762, Tyr-807 and Tyr-822 are involved in binding to SYK, GRB2 and SYK, respectively. Phosphorylation of Tyr-842 is involved in binding to SYK, PLCG2 and PIK3R1/PIK3R2. In terms of processing, phosphorylated on tyrosine residues by LYN.

Its subcellular location is the cell membrane. Its function is as follows. Most highly expressed siglec (sialic acid-binding immunoglobulin-like lectin) on B-cells that plays a role in various aspects of B-cell biology including differentiation, antigen presentation, and trafficking to bone marrow. Binds to alpha 2,6-linked sialic acid residues of surface molecules such as CD22 itself, CD45 and IgM in a cis configuration. Can also bind to ligands on other cells as an adhesion molecule in a trans configuration. Acts as an inhibitory coreceptor on the surface of B-cells and inhibits B-cell receptor induced signaling, characterized by inhibition of the calcium mobilization and cellular activation. Mechanistically, the immunoreceptor tyrosine-based inhibitory motif domain is phosphorylated by the Src kinase LYN, which in turn leads to the recruitment of the protein tyrosine phosphatase 1/PTPN6, leading to the negative regulation of BCR signaling. If this negative signaling from is of sufficient strength, apoptosis of the B-cell can be induced. The sequence is that of B-cell receptor CD22 from Gorilla gorilla gorilla (Western lowland gorilla).